The sequence spans 237 residues: Uridylate kinase (237 aa).

9 to 12 (KLSG) provides a ligand contact to ATP. The tract at residues 17–22 (GSQGYG) is involved in allosteric activation by GTP. UMP is bound at residue Gly51. Positions 52 and 56 each coordinate ATP. Residues Asp71 and 132–139 (CGNPFFTT) contribute to the UMP site. Positions 159, 165, and 168 each coordinate ATP.

This sequence belongs to the UMP kinase family. Homohexamer.

It localises to the cytoplasm. It carries out the reaction UMP + ATP = UDP + ADP. It participates in pyrimidine metabolism; CTP biosynthesis via de novo pathway; UDP from UMP (UMPK route): step 1/1. With respect to regulation, allosterically activated by GTP. Inhibited by UTP. Catalyzes the reversible phosphorylation of UMP to UDP. The polypeptide is Uridylate kinase (Synechococcus sp. (strain CC9902)).